Consider the following 99-residue polypeptide: Large ribosomal subunit protein eL42 (99 aa).

The protein belongs to the eukaryotic ribosomal protein eL42 family.

The chain is Large ribosomal subunit protein eL42 (RPL44) from Chlamydomonas reinhardtii (Chlamydomonas smithii).